Reading from the N-terminus, the 509-residue chain is Seipin-3 (509 aa).

The disordered stretch occupies residues 33–73 (YDCLNSSPPANLRRRRLPMDTDSSSSSSTSSLESCEKRSTV). The span at 52–63 (DTDSSSSSSTSS) shows a compositional bias: low complexity. A run of 2 helical transmembrane segments spans residues 238-258 (LFCAVYVGIMLFALLVSAFMI) and 455-475 (LFVWISMSLFIMELLFALVFF).

Belongs to the seipin family. In terms of tissue distribution, expressed in seeds, seedlings, leaves, stems and roots. Not detected in flowers.

It is found in the endoplasmic reticulum membrane. Functionally, involved in lipid metabolism and lipid droplet (LD) morphology, number, and size. Supports the formation of small-sized LDs and modulates triacylglycerol accumulation. Induces probably a reorganization of the endoplasmic reticulum into LD-forming domains. This chain is Seipin-3, found in Arabidopsis thaliana (Mouse-ear cress).